Here is a 136-residue protein sequence, read N- to C-terminus: Histone H3 (136 aa).

The protein belongs to the histone H3 family. As to quaternary structure, the nucleosome is a histone octamer containing two molecules each of H2A, H2B, H3 and H4 assembled in one H3-H4 heterotetramer and two H2A-H2B heterodimers. The octamer wraps approximately 147 bp of DNA.

The protein resides in the nucleomorph. The protein localises to the chromosome. Core component of nucleosome. Nucleosomes wrap and compact DNA into chromatin, limiting DNA accessibility to the cellular machineries which require DNA as a template. Histones thereby play a central role in transcription regulation, DNA repair, DNA replication and chromosomal stability. DNA accessibility is regulated via a complex set of post-translational modifications of histones, also called histone code, and nucleosome remodeling. The protein is Histone H3 of Guillardia theta (Cryptophyte).